Reading from the N-terminus, the 869-residue chain is Bifunctional uridylyltransferase/uridylyl-removing enzyme (869 aa).

The interval 1–332 (MTDAPAERPD…QFDGEATPES (332 aa)) is uridylyltransferase. The tract at residues 333-691 (LGGGFSLRRG…RRAVPDNDAL (359 aa)) is uridylyl-removing. Residues 450 to 572 (VDQHTLMVLR…VGTRERLDYL (123 aa)) form the HD domain. 2 ACT domains span residues 692-774 (EVFV…RAVP) and 798-869 (RISL…LDPV).

It belongs to the GlnD family. It depends on Mg(2+) as a cofactor.

It catalyses the reaction [protein-PII]-L-tyrosine + UTP = [protein-PII]-uridylyl-L-tyrosine + diphosphate. The enzyme catalyses [protein-PII]-uridylyl-L-tyrosine + H2O = [protein-PII]-L-tyrosine + UMP + H(+). With respect to regulation, uridylyltransferase (UTase) activity is inhibited by glutamine, while glutamine activates uridylyl-removing (UR) activity. Its function is as follows. Modifies, by uridylylation and deuridylylation, the PII regulatory proteins (GlnB and homologs), in response to the nitrogen status of the cell that GlnD senses through the glutamine level. Under low glutamine levels, catalyzes the conversion of the PII proteins and UTP to PII-UMP and PPi, while under higher glutamine levels, GlnD hydrolyzes PII-UMP to PII and UMP (deuridylylation). Thus, controls uridylylation state and activity of the PII proteins, and plays an important role in the regulation of nitrogen assimilation and metabolism. The polypeptide is Bifunctional uridylyltransferase/uridylyl-removing enzyme (Xanthomonas oryzae pv. oryzae (strain MAFF 311018)).